The sequence spans 956 residues: Protein translocase subunit SecA (956 aa).

ATP is bound by residues Gln-87, 105 to 109 (GEGKT), and Asp-524. Cys-940, Cys-942, Cys-951, and His-952 together coordinate Zn(2+).

The protein belongs to the SecA family. As to quaternary structure, monomer and homodimer. Part of the essential Sec protein translocation apparatus which comprises SecA, SecYEG and auxiliary proteins SecDF-YajC and YidC. The cofactor is Zn(2+).

It localises to the cell inner membrane. The protein localises to the cytoplasm. The enzyme catalyses ATP + H2O + cellular proteinSide 1 = ADP + phosphate + cellular proteinSide 2.. In terms of biological role, part of the Sec protein translocase complex. Interacts with the SecYEG preprotein conducting channel. Has a central role in coupling the hydrolysis of ATP to the transfer of proteins into and across the cell membrane, serving both as a receptor for the preprotein-SecB complex and as an ATP-driven molecular motor driving the stepwise translocation of polypeptide chains across the membrane. This Beijerinckia indica subsp. indica (strain ATCC 9039 / DSM 1715 / NCIMB 8712) protein is Protein translocase subunit SecA.